Consider the following 221-residue polypeptide: MFGFHKPKMYRSIEGCCICRAKSSSSRFTDSKRYEKDFQSCFGLHETRSGDICNACVLLVKRWKKLPAGSKKNWNHVVDARAGPSLKTTLKPKKVKTLSGNRMKSNQISKLQKEFKRHNSDAHSTTSSASPAQSPCYSNQSDEGSDTEMASSSNRTPVFSFLDLTYWKRQKICCGIIYKGRFGEVLIDTHLFKPCCSSKKAAAEKPEEQGPAPLPISTQEW.

Disordered regions lie at residues 110-153 (KLQK…ASSS) and 201-221 (AAAE…TQEW). Residues 111–121 (LQKEFKRHNSD) show a composition bias toward basic and acidic residues. Low complexity predominate over residues 124–135 (STTSSASPAQSP). Residues 136–153 (CYSNQSDEGSDTEMASSS) show a composition bias toward polar residues.

Belongs to the SINHCAF family. As to quaternary structure, component of the Sin3/HDAC corepressor complex at least composed of BRMS1, BRMS1L, ING2, SAP30, SAP30L, HDAC1. Found in a complex composed of at least SINHCAF, SIN3A, HDAC1, SAP30, RBBP4, OGT and TET1. Interacts with SIN3A and OGT. As to expression, embryonic stem cells (at protein level).

Its subcellular location is the nucleus. Subunit of the Sin3 deacetylase complex (Sin3/HDAC), this subunit is important for the repression of genes encoding components of the TGF-beta signaling pathway. Core component of a SIN3A complex (composed of at least SINHCAF, SIN3A, HDAC1, SAP30, RBBP4, OGT and TET1) present in embryonic stem (ES) cells. Promotes the stability of SIN3A and its presence on chromatin and is essential for maintaining the potential of ES cells to proliferate rapidly, while ensuring a short G1-phase of the cell cycle, thereby preventing premature lineage priming. This Mus musculus (Mouse) protein is SIN3-HDAC complex-associated factor (Sinhcaf).